Here is a 388-residue protein sequence, read N- to C-terminus: Succinate--CoA ligase [ADP-forming] subunit beta (388 aa).

The ATP-grasp domain maps to 9–244; the sequence is KEILRKFGVA…LDEEDPAEIE (236 aa). Residues K46, 53–55, E99, A102, and E107 contribute to the ATP site; that span reads GRG. Mg(2+)-binding residues include N199 and D213. Residues N264 and 321 to 323 contribute to the substrate site; that span reads GIM.

It belongs to the succinate/malate CoA ligase beta subunit family. Heterotetramer of two alpha and two beta subunits. Requires Mg(2+) as cofactor.

It catalyses the reaction succinate + ATP + CoA = succinyl-CoA + ADP + phosphate. The catalysed reaction is GTP + succinate + CoA = succinyl-CoA + GDP + phosphate. It functions in the pathway carbohydrate metabolism; tricarboxylic acid cycle; succinate from succinyl-CoA (ligase route): step 1/1. In terms of biological role, succinyl-CoA synthetase functions in the citric acid cycle (TCA), coupling the hydrolysis of succinyl-CoA to the synthesis of either ATP or GTP and thus represents the only step of substrate-level phosphorylation in the TCA. The beta subunit provides nucleotide specificity of the enzyme and binds the substrate succinate, while the binding sites for coenzyme A and phosphate are found in the alpha subunit. The chain is Succinate--CoA ligase [ADP-forming] subunit beta from Burkholderia cenocepacia (strain HI2424).